A 451-amino-acid chain; its full sequence is Trigger factor (451 aa).

In terms of domain architecture, PPIase FKBP-type spans 162–243 (GDYAIIDITT…VQQSKERKLP (82 aa)).

The protein belongs to the FKBP-type PPIase family. Tig subfamily.

The protein localises to the cytoplasm. It catalyses the reaction [protein]-peptidylproline (omega=180) = [protein]-peptidylproline (omega=0). Its function is as follows. Involved in protein export. Acts as a chaperone by maintaining the newly synthesized protein in an open conformation. Functions as a peptidyl-prolyl cis-trans isomerase. The protein is Trigger factor of Corynebacterium aurimucosum (strain ATCC 700975 / DSM 44827 / CIP 107346 / CN-1) (Corynebacterium nigricans).